Here is a 304-residue protein sequence, read N- to C-terminus: Putative AraC-like transcription regulator (304 aa).

The HTH araC/xylS-type domain maps to 202-300; it reads ATALTCLHRD…GMPPGDYRKH (99 aa). 2 consecutive DNA-binding regions (H-T-H motif) follow at residues 219–240 and 267–290; these read ADLA…KATV and LASI…KRVL.

This chain is Putative AraC-like transcription regulator, found in Streptomyces lividans.